Here is a 362-residue protein sequence, read N- to C-terminus: Snurportin-1 (362 aa).

N-acetylmethionine is present on Met-1. Disordered regions lie at residues 1–40 (MEEL…SLEQ) and 69–90 (DWTG…MDVD). The necessary for interaction with KPNB1 and m3G-cap U1 and U5 snRNP import receptor activity stretch occupies residues 1–65 (MEELSQALAG…LDYVNHARRL (65 aa)). The segment at 1–160 (MEELSQALAG…NTFPSLLPGG (160 aa)) is necessary for interaction with XPO1. The IBB domain occupies 11-73 (SFSVSQDLNS…RLAEDDWTGM (63 aa)). The segment covering 12-22 (FSVSQDLNSTA) has biased composition (polar residues). Residues 69-89 (DWTGMESEEEEEKKDDEEMDV) show a composition bias toward acidic residues. Phosphoserine is present on Ser-75. Residues 128–130 (GKR) are interaction with m3G-cap structure. The necessary for binding to the m3G-cap structure stretch occupies residues 210–330 (LHSKLPEEEG…GIMGKLTPRA (121 aa)). The disordered stretch occupies residues 319 to 362 (KEGIMGKLTPRASENGHYELEHLSTPKLKSPPQRPNHPESLMEN). Positions 332–342 (ENGHYELEHLS) are enriched in basic and acidic residues.

It belongs to the snurportin family. Component of an import snRNP complex composed of KPNB1, SNUPN, SMN1 and ZNF259. Component of a nuclear export receptor complex composed of KPNB1, Ran, SNUPN and XPO1. Found in a trimeric export complex with SNUPN, Ran and XPO1. Interacts (via IBB domain) with KPNB1; the interaction is direct. Interacts with DDX20, IPO7, SMN1, SNRPB and XPO1. Interacts directly with XPO1. Its interaction with XPO1 and binding to m3G-cap U snRNPs appears to be mutually exclusive. Can form homomers.

Its subcellular location is the nucleus. It localises to the cytoplasm. Its function is as follows. Functions as an U snRNP-specific nuclear import adapter. Involved in the trimethylguanosine (m3G)-cap-dependent nuclear import of U snRNPs. Binds specifically to the terminal m3G-cap U snRNAs. The sequence is that of Snurportin-1 (SNUPN) from Bos taurus (Bovine).